The sequence spans 442 residues: Cysteine proteinase 4 (442 aa).

The signal sequence occupies residues 1-17 (MRVLSFLCLLLVSYASA). Positions 18-111 (KQQFSELQYR…TEEEKIFSTP (94 aa)) are cleaved as a propeptide — activation peptide. Cystine bridges form between Cys132/Cys178 and Cys169/Cys212. Residue Cys135 is part of the active site. Residues Asn228 and Asn254 are each glycosylated (N-linked (GlcNAc...) asparagine). A disulfide bridge connects residues Cys270 and Cys428. Residue His277 is part of the active site. Residues 286–396 (SGSSSSSGSS…SGSGSGAVEA (111 aa)) are disordered. A compositionally biased stretch (low complexity) spans 287-376 (GSSSSSGSSS…SASGQASASG (90 aa)). Over residues 377–391 (SGSGSGSGSGSGSGS) the composition is skewed to gly residues. Asn406 is a catalytic residue.

It belongs to the peptidase C1 family. Glycosylated; contains GlcNAc-alpha-1-P-Ser residues and fucose.

It localises to the lysosome. In Dictyostelium discoideum (Social amoeba), this protein is Cysteine proteinase 4 (cprD).